The sequence spans 258 residues: UPF0246 protein Pnuc_0753 (258 aa).

Belongs to the UPF0246 family.

This chain is UPF0246 protein Pnuc_0753, found in Polynucleobacter asymbioticus (strain DSM 18221 / CIP 109841 / QLW-P1DMWA-1) (Polynucleobacter necessarius subsp. asymbioticus).